The chain runs to 334 residues: MLTYAQAGVDEEKTSKALRFIIEAARKTFEFRKGKLGEPGDIGHYSALLDFGNYYLAITTDGVGTKVLVAEAVGKFDTIGIDMIAMNVNDLICVGAEPIALVDYFAIKEPNERVFEEVAKGLYKGAKEAGIAIVGGETAVMPDLVNGYDLAGTAIGIVEKDKVITGEKIRPGDAVIGISSSGIHSNGLTLARKLLIPKYGLDYEYESRKLWEWLLEPTRIYVKPILELLKSVEVHGLAHITGGGLLNLKRITNYGFRLNMPPINGIFKLIHENGVPLEEMFRVFNMGVGFVVVVSQEDKEEALQILNRYYESFELGTVSERPGIIVENYGVKFI.

Belongs to the AIR synthase family.

The protein resides in the cytoplasm. It catalyses the reaction 2-formamido-N(1)-(5-O-phospho-beta-D-ribosyl)acetamidine + ATP = 5-amino-1-(5-phospho-beta-D-ribosyl)imidazole + ADP + phosphate + H(+). It participates in purine metabolism; IMP biosynthesis via de novo pathway; 5-amino-1-(5-phospho-D-ribosyl)imidazole from N(2)-formyl-N(1)-(5-phospho-D-ribosyl)glycinamide: step 2/2. The polypeptide is Phosphoribosylformylglycinamidine cyclo-ligase (Pyrococcus furiosus (strain ATCC 43587 / DSM 3638 / JCM 8422 / Vc1)).